A 64-amino-acid polypeptide reads, in one-letter code: UPF0434 protein BOV_A0835 (64 aa).

This sequence belongs to the UPF0434 family.

This chain is UPF0434 protein BOV_A0835, found in Brucella ovis (strain ATCC 25840 / 63/290 / NCTC 10512).